Consider the following 887-residue polypeptide: Alanine--tRNA ligase (887 aa).

Zn(2+) contacts are provided by histidine 565, histidine 569, cysteine 674, and histidine 678.

It belongs to the class-II aminoacyl-tRNA synthetase family. It depends on Zn(2+) as a cofactor.

The protein localises to the cytoplasm. The catalysed reaction is tRNA(Ala) + L-alanine + ATP = L-alanyl-tRNA(Ala) + AMP + diphosphate. Its function is as follows. Catalyzes the attachment of alanine to tRNA(Ala) in a two-step reaction: alanine is first activated by ATP to form Ala-AMP and then transferred to the acceptor end of tRNA(Ala). Also edits incorrectly charged Ser-tRNA(Ala) and Gly-tRNA(Ala) via its editing domain. This Erythrobacter litoralis (strain HTCC2594) protein is Alanine--tRNA ligase.